The chain runs to 344 residues: Phenylalanine--tRNA ligase alpha subunit (344 aa).

Residue Glu-255 participates in Mg(2+) binding.

Belongs to the class-II aminoacyl-tRNA synthetase family. Phe-tRNA synthetase alpha subunit type 1 subfamily. Tetramer of two alpha and two beta subunits. Requires Mg(2+) as cofactor.

It localises to the cytoplasm. It catalyses the reaction tRNA(Phe) + L-phenylalanine + ATP = L-phenylalanyl-tRNA(Phe) + AMP + diphosphate + H(+). In Cytophaga hutchinsonii (strain ATCC 33406 / DSM 1761 / CIP 103989 / NBRC 15051 / NCIMB 9469 / D465), this protein is Phenylalanine--tRNA ligase alpha subunit.